Consider the following 612-residue polypeptide: RNA polymerase sigma factor RpoD (612 aa).

Residues 191–206 are compositionally biased toward acidic residues; the sequence is QQNNEEDEENNQEDHE. Residues 191–210 form a disordered region; it reads QQNNEEDEENNQEDHEDDHS. Positions 378–448 are sigma-70 factor domain-2; the sequence is MVEANLRLVI…TRSIADQART (71 aa). Residues 402-405 carry the Interaction with polymerase core subunit RpoC motif; it reads DLIQ. The segment at 457–533 is sigma-70 factor domain-3; that stretch reads ETINKLNRIS…DTTLELPLDS (77 aa). A sigma-70 factor domain-4 region spans residues 546–599; the sequence is VLSGLTAREAKVLRMRFGIDMNTDHTLEEVGKQFDVTRERIRQIEAKALRKLRH. The segment at residues 572–591 is a DNA-binding region (H-T-H motif); it reads LEEVGKQFDVTRERIRQIEA.

The protein belongs to the sigma-70 factor family. RpoD/SigA subfamily. Interacts transiently with the RNA polymerase catalytic core.

It localises to the cytoplasm. Functionally, sigma factors are initiation factors that promote the attachment of RNA polymerase to specific initiation sites and are then released. This sigma factor is the primary sigma factor during exponential growth. This is RNA polymerase sigma factor RpoD from Buchnera aphidicola subsp. Acyrthosiphon pisum (strain APS) (Acyrthosiphon pisum symbiotic bacterium).